The sequence spans 224 residues: Probable Brix domain-containing ribosomal biogenesis protein (224 aa).

The Brix domain occupies 1–196; that stretch reads MMLITTSHRP…IWIMEDGRRW (196 aa).

Functionally, probably involved in the biogenesis of the ribosome. The chain is Probable Brix domain-containing ribosomal biogenesis protein from Pyrococcus abyssi (strain GE5 / Orsay).